A 117-amino-acid chain; its full sequence is ATP-dependent Clp protease adapter protein ClpS 1 (117 aa).

A disordered region spans residues Met1–Thr33.

Belongs to the ClpS family. In terms of assembly, binds to the N-terminal domain of the chaperone ClpA.

In terms of biological role, involved in the modulation of the specificity of the ClpAP-mediated ATP-dependent protein degradation. The sequence is that of ATP-dependent Clp protease adapter protein ClpS 1 from Rhizobium meliloti (strain 1021) (Ensifer meliloti).